The following is a 459-amino-acid chain: Vanillin aminotransferase (459 aa).

Residues 115-116 and Asp255 contribute to the pyridoxal 5'-phosphate site; that span reads GS. Lys284 carries the N6-(pyridoxal phosphate)lysine modification. Pyridoxal 5'-phosphate is bound at residue 320-321; sequence FT. Residues 428–459 are a coiled coil; it reads LSLEELDELIRIYGKALKDTEKRVEELKSQKK.

This sequence belongs to the class-III pyridoxal-phosphate-dependent aminotransferase family. Expressed in placental tissue of immature fruit.

It catalyses the reaction vanillin + L-alanine = vanillylamine + pyruvate. In terms of biological role, involved in the biosynthesis of capsaicinoids natural products, pungent alkaloids synthesized from phenylpropanoid intermediates in the placental tissue of chili pepper fruit acting as repellant on herbivorous mammals and conferring spiciness to hot peppers. Can transfer an amine from alanine to vanillin, forming vanillylamine and pyruvate. This Capsicum frutescens (Cayenne pepper) protein is Vanillin aminotransferase.